We begin with the raw amino-acid sequence, 227 residues long: UPF0758 protein lpg2489 (227 aa).

Positions Arg102–Val225 constitute an MPN domain. Residues His173, His175, and Asp186 each contribute to the Zn(2+) site. The JAMM motif motif lies at His173–Asp186.

Belongs to the UPF0758 family.

In Legionella pneumophila subsp. pneumophila (strain Philadelphia 1 / ATCC 33152 / DSM 7513), this protein is UPF0758 protein lpg2489.